Reading from the N-terminus, the 168-residue chain is Ribosome rescue factor SmrB (168 aa).

One can recognise a Smr domain in the interval 92–167; the sequence is LDLHGLTKEQ…GDAAILILFE (76 aa).

The protein belongs to the SmrB family. In terms of assembly, associates with collided ribosomes, but not with correctly translating polysomes.

Its function is as follows. Acts as a ribosome collision sensor. Detects stalled/collided disomes (pairs of ribosomes where the leading ribosome is stalled and a second ribosome has collided with it) and endonucleolytically cleaves mRNA at the 5' boundary of the stalled ribosome. Stalled/collided disomes form a new interface (primarily via the 30S subunits) that binds SmrB. Cleaved mRNA becomes available for tmRNA ligation, leading to ribosomal subunit dissociation and rescue of stalled ribosomes. This chain is Ribosome rescue factor SmrB, found in Pasteurella multocida (strain Pm70).